The primary structure comprises 217 residues: Uracil-DNA glycosylase (217 aa).

The Proton acceptor role is filled by aspartate 62.

Belongs to the uracil-DNA glycosylase (UDG) superfamily. UNG family.

Its subcellular location is the cytoplasm. It carries out the reaction Hydrolyzes single-stranded DNA or mismatched double-stranded DNA and polynucleotides, releasing free uracil.. In terms of biological role, excises uracil residues from the DNA which can arise as a result of misincorporation of dUMP residues by DNA polymerase or due to deamination of cytosine. This is Uracil-DNA glycosylase from Streptococcus pyogenes serotype M6 (strain ATCC BAA-946 / MGAS10394).